We begin with the raw amino-acid sequence, 130 residues long: Keratin-associated protein 12-1 (130 aa).

Repeat copies occupy residues 10 to 14, 15 to 29, 34 to 38, 40 to 44, 45 to 49, 60 to 64, 85 to 89, 90 to 94, 95 to 99, 104 to 108, 109 to 113, 114 to 118, 119 to 123, and 124 to 128. The 14 X 5 AA approximate repeats stretch occupies residues 10-128; the sequence is CQPSCCVSSS…CKPVTCSNPS (119 aa).

This sequence belongs to the KRTAP type 12 family. Interacts with hair keratins. In terms of tissue distribution, expressed only in the head and back skin of a 3 day old mouse. Not expressed in adult skin.

Functionally, in the hair cortex, hair keratin intermediate filaments are embedded in an interfilamentous matrix, consisting of hair keratin-associated proteins (KRTAP), which are essential for the formation of a rigid and resistant hair shaft through their extensive disulfide bond cross-linking with abundant cysteine residues of hair keratins. The matrix proteins include the high-sulfur and high-glycine-tyrosine keratins. The protein is Keratin-associated protein 12-1 of Mus musculus (Mouse).